Consider the following 156-residue polypeptide: Phosphopantetheine adenylyltransferase (156 aa).

Thr10 lines the substrate pocket. ATP is bound by residues 10–11 (TF) and His18. 3 residues coordinate substrate: Lys42, Leu74, and Arg88. ATP-binding positions include 89 to 91 (GIR), Glu99, and 124 to 130 (WAFISSS).

Belongs to the bacterial CoaD family. As to quaternary structure, homohexamer. Mg(2+) serves as cofactor.

Its subcellular location is the cytoplasm. The enzyme catalyses (R)-4'-phosphopantetheine + ATP + H(+) = 3'-dephospho-CoA + diphosphate. The protein operates within cofactor biosynthesis; coenzyme A biosynthesis; CoA from (R)-pantothenate: step 4/5. Its function is as follows. Reversibly transfers an adenylyl group from ATP to 4'-phosphopantetheine, yielding dephospho-CoA (dPCoA) and pyrophosphate. In Hamiltonella defensa subsp. Acyrthosiphon pisum (strain 5AT), this protein is Phosphopantetheine adenylyltransferase.